The sequence spans 452 residues: Translation initiation factor eIF2B subunit gamma (452 aa).

M1 carries the N-acetylmethionine modification. S260 is modified (phosphoserine).

Belongs to the eIF-2B gamma/epsilon subunits family. Component of the translation initiation factor 2B (eIF2B) complex which is a heterodecamer of two sets of five different subunits: alpha, beta, gamma, delta and epsilon. Subunits alpha, beta and delta comprise a regulatory subcomplex and subunits epsilon and gamma comprise a catalytic subcomplex. Within the complex, the hexameric regulatory complex resides at the center, with the two heterodimeric catalytic subcomplexes bound on opposite sides.

The protein resides in the cytoplasm. It localises to the cytosol. Its activity is regulated as follows. Activated by the chemical integrated stress response (ISR) inhibitor ISRIB which stimulates guanine nucleotide exchange factor activity for both phosphorylated and unphosphorylated eIF2. In terms of biological role, acts as a component of the translation initiation factor 2B (eIF2B) complex, which catalyzes the exchange of GDP for GTP on the eukaryotic initiation factor 2 (eIF2) complex gamma subunit. Its guanine nucleotide exchange factor activity is repressed when bound to eIF2 complex phosphorylated on the alpha subunit, thereby limiting the amount of methionyl-initiator methionine tRNA available to the ribosome and consequently global translation is repressed. This is Translation initiation factor eIF2B subunit gamma (EIF2B3) from Homo sapiens (Human).